The sequence spans 97 residues: Large ribosomal subunit protein uL23 (97 aa).

Belongs to the universal ribosomal protein uL23 family. In terms of assembly, part of the 50S ribosomal subunit. Contacts protein L29, and trigger factor when it is bound to the ribosome.

One of the early assembly proteins it binds 23S rRNA. One of the proteins that surrounds the polypeptide exit tunnel on the outside of the ribosome. Forms the main docking site for trigger factor binding to the ribosome. This Clostridium botulinum (strain ATCC 19397 / Type A) protein is Large ribosomal subunit protein uL23.